The primary structure comprises 353 residues: Stearoyl-CoA desaturase 4 (353 aa).

Residues 1–42 form a disordered region; the sequence is MTAHLPQEISSRCSTTNIMEPHSRRQQDGEEKMPLQAEDIRP. The Cytoplasmic portion of the chain corresponds to 1 to 66; sequence MTAHLPQEIS…EGPPPKLEYV (66 aa). Residues 8–18 are compositionally biased toward polar residues; sequence EISSRCSTTNI. The segment covering 21–42 has biased composition (basic and acidic residues); the sequence is PHSRRQQDGEEKMPLQAEDIRP. Residues 67 to 87 traverse the membrane as a helical segment; that stretch reads WRNIIFMALLHVGALYGITLV. Position 69 (asparagine 69) interacts with substrate. Over 88-91 the chain is Lumenal; that stretch reads PSCK. A helical membrane pass occupies residues 92–112; sequence VYTWLLGVFYNVVAGLGITAG. The Cytoplasmic segment spans residues 113–211; that stretch reads AHRLWSHRTY…EKLVMFQRRY (99 aa). Fe cation-binding residues include histidine 114 and histidine 119. Positions 114–119 match the Histidine box-1 motif; sequence HRLWSH. 3 residues coordinate substrate: asparagine 142, arginine 149, and aspartate 150. Residues histidine 151, histidine 154, and histidine 155 each contribute to the Fe cation site. The Histidine box-2 motif lies at 151 to 155; the sequence is HRAHH. Residues arginine 182 and lysine 183 each contribute to the substrate site. A helical transmembrane segment spans residues 212 to 231; sequence YKLAVTLMFIILPTLVPWYL. At 232–235 the chain is on the lumenal side; that stretch reads WGET. A helical transmembrane segment spans residues 236–257; that stretch reads FQHSLCVSNFLRYAVLLNFTWL. Tryptophan 256 contacts substrate. Over 258–353 the chain is Cytoplasmic; sequence VNSAAHLYGY…RTGDGSHKSS (96 aa). Residues histidine 263, histidine 292, histidine 295, and histidine 296 each contribute to the Fe cation site. A Histidine box-3 motif is present at residues 292 to 296; the sequence is HNYHH.

The protein belongs to the fatty acid desaturase type 1 family. The cofactor is Fe(2+). As to expression, detected in heart, but not in brain, liver, skin or adipose tissue.

Its subcellular location is the endoplasmic reticulum membrane. The protein localises to the microsome membrane. The enzyme catalyses octadecanoyl-CoA + 2 Fe(II)-[cytochrome b5] + O2 + 2 H(+) = (9Z)-octadecenoyl-CoA + 2 Fe(III)-[cytochrome b5] + 2 H2O. It carries out the reaction hexadecanoyl-CoA + 2 Fe(II)-[cytochrome b5] + O2 + 2 H(+) = (9Z)-hexadecenoyl-CoA + 2 Fe(III)-[cytochrome b5] + 2 H2O. Stearoyl-CoA desaturase that utilizes O(2) and electrons from reduced cytochrome b5 to introduce the first double bond into saturated fatty acyl-CoA substrates. Catalyzes the insertion of a cis double bond at the delta-9 position into fatty acyl-CoA substrates including palmitoyl-CoA and stearoyl-CoA. Required for the biosynthesis of membrane phospholipids, cholesterol esters and triglycerides. The sequence is that of Stearoyl-CoA desaturase 4 from Mus musculus (Mouse).